The sequence spans 200 residues: ATP-dependent Clp protease proteolytic subunit (200 aa).

The Nucleophile role is filled by S98. H123 is an active-site residue.

It belongs to the peptidase S14 family. Fourteen ClpP subunits assemble into 2 heptameric rings which stack back to back to give a disk-like structure with a central cavity, resembling the structure of eukaryotic proteasomes.

The protein localises to the cytoplasm. It catalyses the reaction Hydrolysis of proteins to small peptides in the presence of ATP and magnesium. alpha-casein is the usual test substrate. In the absence of ATP, only oligopeptides shorter than five residues are hydrolyzed (such as succinyl-Leu-Tyr-|-NHMec, and Leu-Tyr-Leu-|-Tyr-Trp, in which cleavage of the -Tyr-|-Leu- and -Tyr-|-Trp bonds also occurs).. In terms of biological role, cleaves peptides in various proteins in a process that requires ATP hydrolysis. Has a chymotrypsin-like activity. Plays a major role in the degradation of misfolded proteins. The chain is ATP-dependent Clp protease proteolytic subunit from Deinococcus geothermalis (strain DSM 11300 / CIP 105573 / AG-3a).